We begin with the raw amino-acid sequence, 357 residues long: Protein pelota homolog (357 aa).

The protein belongs to the eukaryotic release factor 1 family. Pelota subfamily. As to quaternary structure, monomer. The cofactor is a divalent metal cation.

It is found in the cytoplasm. Functionally, may function in recognizing stalled ribosomes, interact with stem-loop structures in stalled mRNA molecules, and effect endonucleolytic cleavage of the mRNA. May play a role in the release non-functional ribosomes and degradation of damaged mRNAs. Has endoribonuclease activity. The sequence is that of Protein pelota homolog from Thermococcus onnurineus (strain NA1).